We begin with the raw amino-acid sequence, 379 residues long: Eukaryotic translation initiation factor 3 subunit M (379 aa).

Residues 179–341 (RSEEASKVMI…RKVIISSVAQ (163 aa)) form the PCI domain.

It belongs to the eIF-3 subunit M family. In terms of assembly, component of the eukaryotic translation initiation factor 3 (eIF-3) complex.

It is found in the cytoplasm. Its function is as follows. Component of the eukaryotic translation initiation factor 3 (eIF-3) complex, which is involved in protein synthesis of a specialized repertoire of mRNAs and, together with other initiation factors, stimulates binding of mRNA and methionyl-tRNAi to the 40S ribosome. The eIF-3 complex specifically targets and initiates translation of a subset of mRNAs involved in cell proliferation. The polypeptide is Eukaryotic translation initiation factor 3 subunit M (Nematostella vectensis (Starlet sea anemone)).